The chain runs to 135 residues: Small ribosomal subunit protein bS18 (135 aa).

Residues 1–65 (MARPDMGGPK…GDEGGGRRGF (65 aa)) are disordered. Residues 9–41 (PKTGGFGGPRSGGFGGGGGGGGGFGGGGFGGGR) are compositionally biased toward gly residues. Residues 42-61 (GGDRGDRGDRDDRGGDEGGG) show a composition bias toward basic and acidic residues.

This sequence belongs to the bacterial ribosomal protein bS18 family. As to quaternary structure, part of the 30S ribosomal subunit. Forms a tight heterodimer with protein bS6.

Its function is as follows. Binds as a heterodimer with protein bS6 to the central domain of the 16S rRNA, where it helps stabilize the platform of the 30S subunit. This chain is Small ribosomal subunit protein bS18, found in Anaeromyxobacter sp. (strain K).